Reading from the N-terminus, the 304-residue chain is MPLEAVVYPQDPFGYLSNCKDFMFHDLYSQEEFVAQDTKNNIDKLGHEQSFVEQGKEDDHQWRDYHQYPLLIPSLGEELGLTAIDVESHPPPQHRRKRRRTRNCKNKEEIENQRMTHIAVERNRRKQMNEYLAVLRSLMPSSYAQRGDQASIVGGAINYVKELEHILQSMEPKRTRTHDPKGDKTSTSSLVGPFTDFFSFPQYSTKSSSDVPESSSSPAEIEVTVAESHANIKIMTKKKPRQLLKLITSLQSLRLTLLHLNVTTLHNSILYSISVRVEEGSQLNTVDDIATALNQTIRRIQEET.

Positions 86–107 (VESHPPPQHRRKRRRTRNCKNK) are disordered. The span at 92–104 (PQHRRKRRRTRNC) shows a compositional bias: basic residues. The bHLH domain occupies 112-163 (NQRMTHIAVERNRRKQMNEYLAVLRSLMPSSYAQRGDQASIVGGAINYVKEL).

In terms of assembly, homodimer. As to expression, expressed constitutively in roots, leaves, stems, and flowers.

The protein localises to the nucleus. The chain is Transcription factor bHLH94 (BHLH94) from Arabidopsis thaliana (Mouse-ear cress).